The following is a 294-amino-acid chain: ATP phosphoribosyltransferase (294 aa).

Belongs to the ATP phosphoribosyltransferase family. Long subfamily. It depends on Mg(2+) as a cofactor.

The protein localises to the cytoplasm. The enzyme catalyses 1-(5-phospho-beta-D-ribosyl)-ATP + diphosphate = 5-phospho-alpha-D-ribose 1-diphosphate + ATP. Its pathway is amino-acid biosynthesis; L-histidine biosynthesis; L-histidine from 5-phospho-alpha-D-ribose 1-diphosphate: step 1/9. Feedback inhibited by histidine. In terms of biological role, catalyzes the condensation of ATP and 5-phosphoribose 1-diphosphate to form N'-(5'-phosphoribosyl)-ATP (PR-ATP). Has a crucial role in the pathway because the rate of histidine biosynthesis seems to be controlled primarily by regulation of HisG enzymatic activity. In Chlorobium luteolum (strain DSM 273 / BCRC 81028 / 2530) (Pelodictyon luteolum), this protein is ATP phosphoribosyltransferase.